A 393-amino-acid polypeptide reads, in one-letter code: MTGPLAAARSVAATKSMTAPTVDERPDIKKGLAGVVVDTTAISKVVPQTNSLTYRGYPVQDLAARCSFEQVAFLLWRGELPTDAELALFSQRERASRRVDRSMLSLLAKLPDNCHPMDVVRTAISYLGAEDPDEDDAAANRAKAMRMMAVLPTIVAIDMRRRRGLPPIAPHSGLGYAQNFLHMCFGEVPETAVVSAFEQSMILYAEHGFNASTFAARVVTSTQSDIYSAVTGAIGALKGRLHGGANEAVMHDMIEIGDPANAREWLRAKLARKEKIMGFGHRVYRHGDSRVPTMKRALERVGTVRDGQRWLDIYQVLAAEMASATGILPNLDFPTGPAYYLMGFDIASFTPIFVMSRITGWTAHIMEQATANALIRPLSAYCGHEQRVLPGTF.

2 residues coordinate substrate: Arg92 and His207. The active site involves His242. Lys275–Phe279 contacts CoA. The active site involves His281. Residue Arg290 coordinates substrate. Asp332 is a catalytic residue. Substrate is bound by residues Arg357 and Arg376.

Belongs to the citrate synthase family. Homodimer.

The enzyme catalyses propanoyl-CoA + oxaloacetate + H2O = (2S,3S)-2-methylcitrate + CoA + H(+). The catalysed reaction is oxaloacetate + acetyl-CoA + H2O = citrate + CoA + H(+). The protein operates within organic acid metabolism; propanoate degradation. It functions in the pathway carbohydrate metabolism; tricarboxylic acid cycle; isocitrate from oxaloacetate: step 1/2. Its function is as follows. Involved in the catabolism of short chain fatty acids (SCFA) via the tricarboxylic acid (TCA)(acetyl degradation route) and via the 2-methylcitrate cycle I (propionate degradation route). Catalyzes the Claisen condensation of propionyl-CoA and oxaloacetate (OAA) to yield 2-methylcitrate (2-MC) and CoA. Also catalyzes the condensation of oxaloacetate with acetyl-CoA. The protein is 2-methylcitrate synthase (gltA1) of Mycobacterium tuberculosis (strain ATCC 35801 / TMC 107 / Erdman).